The primary structure comprises 215 residues: Outer membrane protein assembly factor BamC homolog (215 aa).

The N-terminal stretch at 1–16 (MKKIILNLVTAIILAG) is a signal peptide. A lipid anchor (N-palmitoyl cysteine) is attached at cysteine 17. A lipid anchor (S-diacylglycerol cysteine) is attached at cysteine 17.

It belongs to the BamC family.

It is found in the cell outer membrane. The sequence is that of Outer membrane protein assembly factor BamC homolog from Haemophilus influenzae (strain ATCC 51907 / DSM 11121 / KW20 / Rd).